The chain runs to 173 residues: Crossover junction endodeoxyribonuclease RuvC (173 aa).

Residues aspartate 8, glutamate 67, and aspartate 139 contribute to the active site. Mg(2+) contacts are provided by aspartate 8, glutamate 67, and aspartate 139.

This sequence belongs to the RuvC family. As to quaternary structure, homodimer which binds Holliday junction (HJ) DNA. The HJ becomes 2-fold symmetrical on binding to RuvC with unstacked arms; it has a different conformation from HJ DNA in complex with RuvA. In the full resolvosome a probable DNA-RuvA(4)-RuvB(12)-RuvC(2) complex forms which resolves the HJ. The cofactor is Mg(2+).

The protein resides in the cytoplasm. It carries out the reaction Endonucleolytic cleavage at a junction such as a reciprocal single-stranded crossover between two homologous DNA duplexes (Holliday junction).. The RuvA-RuvB-RuvC complex processes Holliday junction (HJ) DNA during genetic recombination and DNA repair. Endonuclease that resolves HJ intermediates. Cleaves cruciform DNA by making single-stranded nicks across the HJ at symmetrical positions within the homologous arms, yielding a 5'-phosphate and a 3'-hydroxyl group; requires a central core of homology in the junction. The consensus cleavage sequence is 5'-(A/T)TT(C/G)-3'. Cleavage occurs on the 3'-side of the TT dinucleotide at the point of strand exchange. HJ branch migration catalyzed by RuvA-RuvB allows RuvC to scan DNA until it finds its consensus sequence, where it cleaves and resolves the cruciform DNA. The polypeptide is Crossover junction endodeoxyribonuclease RuvC (Aliivibrio fischeri (strain ATCC 700601 / ES114) (Vibrio fischeri)).